The primary structure comprises 449 residues: Probable phosphoglucosamine mutase (449 aa).

The active-site Phosphoserine intermediate is the serine 96. Residues serine 96, aspartate 233, aspartate 235, and aspartate 237 each coordinate Mg(2+). Serine 96 bears the Phosphoserine mark.

The protein belongs to the phosphohexose mutase family. Mg(2+) is required as a cofactor. In terms of processing, activated by phosphorylation.

It catalyses the reaction alpha-D-glucosamine 1-phosphate = D-glucosamine 6-phosphate. Functionally, catalyzes the conversion of glucosamine-6-phosphate to glucosamine-1-phosphate. Does not display phosphoglucomutase (PGM) or phosphomannomutase (PMM) activities. This is Probable phosphoglucosamine mutase (glmM) from Thermococcus kodakarensis (strain ATCC BAA-918 / JCM 12380 / KOD1) (Pyrococcus kodakaraensis (strain KOD1)).